A 280-amino-acid chain; its full sequence is MSLQFAKYHGLGNDFILVDNRESGEPRLTPEQAVQVCDRNFGVGADGVIFALPGSGDSDYVMRIFNSDGSEPEMCGNGIRCLAKFLSELDGGAQSRYRIATGAGLIVPTLTETGLVTVDMGPAYLKPVEIPTTLTGTGDRVVEADLEVGDRPWKVTTVSMGNPHCITFVEDVAAVPLAEIGPLFEHHPVFPQRTNTEFVEVVRPDYLKMRVWERGAGATLACGTGACATLVAAVLTGRSDRQATVELPGGPLQIEWREDGHLFMTGPAVKVFSGSMELAA.

Positions 13 and 66 each coordinate substrate. Cysteine 75 acts as the Proton donor in catalysis. Residues glycine 76–asparagine 77, asparagine 162, asparagine 195, and glutamate 213–arginine 214 contribute to the substrate site. Cysteine 222 functions as the Proton acceptor in the catalytic mechanism. Glycine 223–threonine 224 is a substrate binding site.

This sequence belongs to the diaminopimelate epimerase family. As to quaternary structure, homodimer.

It localises to the cytoplasm. It carries out the reaction (2S,6S)-2,6-diaminopimelate = meso-2,6-diaminopimelate. The protein operates within amino-acid biosynthesis; L-lysine biosynthesis via DAP pathway; DL-2,6-diaminopimelate from LL-2,6-diaminopimelate: step 1/1. Catalyzes the stereoinversion of LL-2,6-diaminopimelate (L,L-DAP) to meso-diaminopimelate (meso-DAP), a precursor of L-lysine and an essential component of the bacterial peptidoglycan. The polypeptide is Diaminopimelate epimerase (Synechococcus elongatus (strain ATCC 33912 / PCC 7942 / FACHB-805) (Anacystis nidulans R2)).